The following is a 757-amino-acid chain: Polyribonucleotide nucleotidyltransferase (757 aa).

Mg(2+)-binding residues include D532 and D538. In terms of domain architecture, KH spans 598–657; that stretch reads PRVTAIKVPVDKIGEVIGPKGKMINSITEQTGANISIEDDGTVFVGATDGPSAQAAIDMI. Residues 669–738 enclose the S1 motif domain; the sequence is GERFLGTVVK…NRGKISLIPV (70 aa).

Belongs to the polyribonucleotide nucleotidyltransferase family. It depends on Mg(2+) as a cofactor.

It localises to the cytoplasm. It carries out the reaction RNA(n+1) + phosphate = RNA(n) + a ribonucleoside 5'-diphosphate. Functionally, involved in mRNA degradation. Catalyzes the phosphorolysis of single-stranded polyribonucleotides processively in the 3'- to 5'-direction. In Rhodococcus jostii (strain RHA1), this protein is Polyribonucleotide nucleotidyltransferase.